The chain runs to 70 residues: MDACLFHCKYPGIGNTRIFTEEQHNHDGTGLSQVVLNAIFNLVCLLQVYVQTSYLSQQSSIIRYTAFTGP.

This is an uncharacterized protein from Escherichia coli (strain K12).